Consider the following 208-residue polypeptide: Small ribosomal subunit protein uS4 (208 aa).

The S4 RNA-binding domain maps to 98 to 161 (RRLDNVVYRL…KASPRIKELV (64 aa)).

The protein belongs to the universal ribosomal protein uS4 family. Part of the 30S ribosomal subunit. Contacts protein S5. The interaction surface between S4 and S5 is involved in control of translational fidelity.

Its function is as follows. One of the primary rRNA binding proteins, it binds directly to 16S rRNA where it nucleates assembly of the body of the 30S subunit. Functionally, with S5 and S12 plays an important role in translational accuracy. The sequence is that of Small ribosomal subunit protein uS4 from Desulforamulus reducens (strain ATCC BAA-1160 / DSM 100696 / MI-1) (Desulfotomaculum reducens).